A 257-amino-acid polypeptide reads, in one-letter code: Imidazole glycerol phosphate synthase subunit HisF (257 aa).

Residues D11 and D130 contribute to the active site.

This sequence belongs to the HisA/HisF family. In terms of assembly, heterodimer of HisH and HisF.

The protein resides in the cytoplasm. It catalyses the reaction 5-[(5-phospho-1-deoxy-D-ribulos-1-ylimino)methylamino]-1-(5-phospho-beta-D-ribosyl)imidazole-4-carboxamide + L-glutamine = D-erythro-1-(imidazol-4-yl)glycerol 3-phosphate + 5-amino-1-(5-phospho-beta-D-ribosyl)imidazole-4-carboxamide + L-glutamate + H(+). It functions in the pathway amino-acid biosynthesis; L-histidine biosynthesis; L-histidine from 5-phospho-alpha-D-ribose 1-diphosphate: step 5/9. Functionally, IGPS catalyzes the conversion of PRFAR and glutamine to IGP, AICAR and glutamate. The HisF subunit catalyzes the cyclization activity that produces IGP and AICAR from PRFAR using the ammonia provided by the HisH subunit. The polypeptide is Imidazole glycerol phosphate synthase subunit HisF (Vibrio parahaemolyticus serotype O3:K6 (strain RIMD 2210633)).